Reading from the N-terminus, the 227-residue chain is Phosphoribosylformylglycinamidine synthase subunit PurQ (227 aa).

The 223-residue stretch at Phe-3–Val-225 folds into the Glutamine amidotransferase type-1 domain. The active-site Nucleophile is Cys-86. Residues His-194 and Glu-196 contribute to the active site.

As to quaternary structure, part of the FGAM synthase complex composed of 1 PurL, 1 PurQ and 2 PurS subunits.

It localises to the cytoplasm. The enzyme catalyses N(2)-formyl-N(1)-(5-phospho-beta-D-ribosyl)glycinamide + L-glutamine + ATP + H2O = 2-formamido-N(1)-(5-O-phospho-beta-D-ribosyl)acetamidine + L-glutamate + ADP + phosphate + H(+). The catalysed reaction is L-glutamine + H2O = L-glutamate + NH4(+). It participates in purine metabolism; IMP biosynthesis via de novo pathway; 5-amino-1-(5-phospho-D-ribosyl)imidazole from N(2)-formyl-N(1)-(5-phospho-D-ribosyl)glycinamide: step 1/2. Its function is as follows. Part of the phosphoribosylformylglycinamidine synthase complex involved in the purines biosynthetic pathway. Catalyzes the ATP-dependent conversion of formylglycinamide ribonucleotide (FGAR) and glutamine to yield formylglycinamidine ribonucleotide (FGAM) and glutamate. The FGAM synthase complex is composed of three subunits. PurQ produces an ammonia molecule by converting glutamine to glutamate. PurL transfers the ammonia molecule to FGAR to form FGAM in an ATP-dependent manner. PurS interacts with PurQ and PurL and is thought to assist in the transfer of the ammonia molecule from PurQ to PurL. The chain is Phosphoribosylformylglycinamidine synthase subunit PurQ from Bacillus mycoides (strain KBAB4) (Bacillus weihenstephanensis).